The following is an 88-amino-acid chain: DNA-directed RNA polymerase subunit omega (88 aa).

The protein belongs to the RNA polymerase subunit omega family. The RNAP catalytic core consists of 2 alpha, 1 beta, 1 beta' and 1 omega subunit. When a sigma factor is associated with the core the holoenzyme is formed, which can initiate transcription.

It catalyses the reaction RNA(n) + a ribonucleoside 5'-triphosphate = RNA(n+1) + diphosphate. In terms of biological role, promotes RNA polymerase assembly. Latches the N- and C-terminal regions of the beta' subunit thereby facilitating its interaction with the beta and alpha subunits. This chain is DNA-directed RNA polymerase subunit omega, found in Yersinia pestis (strain Pestoides F).